The primary structure comprises 206 residues: Probable GTP-binding protein EngB (206 aa).

The EngB-type G domain maps to serine 27–lysine 201. GTP contacts are provided by residues glycine 35 to serine 42, glycine 62 to leucine 66, aspartate 80 to glycine 83, threonine 147 to aspartate 150, and phenylalanine 180 to serine 182. Mg(2+) is bound by residues serine 42 and threonine 64.

This sequence belongs to the TRAFAC class TrmE-Era-EngA-EngB-Septin-like GTPase superfamily. EngB GTPase family. The cofactor is Mg(2+).

In terms of biological role, necessary for normal cell division and for the maintenance of normal septation. The polypeptide is Probable GTP-binding protein EngB (Idiomarina loihiensis (strain ATCC BAA-735 / DSM 15497 / L2-TR)).